The primary structure comprises 316 residues: Cytochrome c biogenesis protein CcsA (316 aa).

Helical transmembrane passes span 19–39 (VLTLGSLAFVLILISLPFSFW), 47–67 (SSIVRILIASANILLAIQLVF), 77–97 (ISNLYESLCFLTWGLTFIQLL), 106–126 (LIQAALTPISLLSIAFASFVL), 151–171 (VIMCSYAALLIGSLLSLVVLL), 224–244 (TITFGFLLLTFGLISGAVWAN), 258–275 (TWAFISWLIYAAYLHTRL), and 285–305 (AIIAIIGLFIILICYIGVNFL).

Belongs to the CcmF/CycK/Ccl1/NrfE/CcsA family. In terms of assembly, may interact with ccs1.

It localises to the cellular thylakoid membrane. Its function is as follows. Required during biogenesis of c-type cytochromes (cytochrome c6 and cytochrome f) at the step of heme attachment. The sequence is that of Cytochrome c biogenesis protein CcsA from Prochlorococcus marinus (strain SARG / CCMP1375 / SS120).